We begin with the raw amino-acid sequence, 499 residues long: Tyrosine-protein kinase Blk (499 aa).

The tract at residues 1–34 is disordered; the sequence is MGLLSSKRQVSEKGKGWSPVKIRTQDKAPPPLPP. A lipid anchor (N-myristoyl glycine) is attached at glycine 2. An SH3 domain is found at 52-112; the sequence is EEERFVVALF…PSNFVAPVET (61 aa). Positions 118 to 214 constitute an SH2 domain; it reads WFFRTISRKD…GLCQKLTLPC (97 aa). Residues 235–488 form the Protein kinase domain; that stretch reads LKLVRKLGSG…FLQSVLEDFY (254 aa). ATP contacts are provided by residues 241 to 249 and lysine 263; that span reads LGSGQFGEV. The active-site Proton acceptor is aspartate 354. Position 383 is a phosphotyrosine; by autocatalysis (tyrosine 383).

Belongs to the protein kinase superfamily. Tyr protein kinase family. SRC subfamily. In terms of assembly, interacts with CBL (via SH2 domain). Interacts with CD79A and CD79B (via SH2 domain). In terms of processing, phosphorylated on tyrosine residues after antibody-mediated surface engagement of the B-cell antigen receptor (BCR). Post-translationally, ubiquitination of activated BLK by the UBE3A ubiquitin protein ligase leads to its degradation by the ubiquitin-proteasome pathway. Expressed in immature Vgamma2 gamma-delta T-cells (at protein level). Expressed in the B-cell lineage.

The protein resides in the cell membrane. The catalysed reaction is L-tyrosyl-[protein] + ATP = O-phospho-L-tyrosyl-[protein] + ADP + H(+). With respect to regulation, antibody-mediated surface engagement of the B-cell antigen receptor (BCR) which results in the phosphorylation of BLK on tyrosine residues, stimulates the enzymatic activity. Functionally, non-receptor tyrosine kinase involved in B-lymphocyte development, differentiation and signaling. B-cell receptor (BCR) signaling requires a tight regulation of several protein tyrosine kinases and phosphatases, and associated coreceptors. Binding of antigen to the B-cell antigen receptor (BCR) triggers signaling that ultimately leads to B-cell activation. Signaling through BLK plays an important role in transmitting signals through surface immunoglobulins and supports the pro-B to pre-B transition, as well as the signaling for growth arrest and apoptosis downstream of B-cell receptor. Specifically binds and phosphorylates CD79A at 'Tyr-188'and 'Tyr-199', as well as CD79B at 'Tyr-196' and 'Tyr-207'. Also phosphorylates the immunoglobulin G receptor FCGR2. With FYN and LYN, plays an essential role in pre-B-cell receptor (pre-BCR)-mediated NF-kappa-B activation. Also contributes to BTK activation by indirectly stimulating BTK intramolecular autophosphorylation. In pancreatic islets, acts as a modulator of beta-cells function through the up-regulation of PDX1 and NKX6-1 and consequent stimulation of insulin secretion in response to glucose. Phosphorylates CGAS, promoting retention of CGAS in the cytosol. The chain is Tyrosine-protein kinase Blk (Blk) from Mus musculus (Mouse).